The following is a 176-amino-acid chain: MTNIRKTHPLLKIVNHSFIDLPAPSNISAWWNFGSLLGLCLLIQILTGLFLAMHYTSDTMTAFSSVTHICRDVNYGWLIRYMHANGASLFFICLFLHVGRGLYYGSYTYFETWNIGVILLFAVMATAFMGYVLPWGQMSFWGATVITNHLSAIPYIGTTLVEWIWGGFSVDKATLT.

Helical transmembrane passes span 33-53, 77-98, and 113-133; these read FGSL…FLAM, WLIR…FLHV, and WNIG…GYVL. Residues His83 and His97 each coordinate heme b.

The protein belongs to the cytochrome b family. As to quaternary structure, the cytochrome bc1 complex contains 11 subunits: 3 respiratory subunits (MT-CYB, CYC1 and UQCRFS1), 2 core proteins (UQCRC1 and UQCRC2) and 6 low-molecular weight proteins (UQCRH/QCR6, UQCRB/QCR7, UQCRQ/QCR8, UQCR10/QCR9, UQCR11/QCR10 and a cleavage product of UQCRFS1). This cytochrome bc1 complex then forms a dimer. The cofactor is heme b.

Its subcellular location is the mitochondrion inner membrane. Its function is as follows. Component of the ubiquinol-cytochrome c reductase complex (complex III or cytochrome b-c1 complex) that is part of the mitochondrial respiratory chain. The b-c1 complex mediates electron transfer from ubiquinol to cytochrome c. Contributes to the generation of a proton gradient across the mitochondrial membrane that is then used for ATP synthesis. The chain is Cytochrome b (MT-CYB) from Sciurus carolinensis (Eastern gray squirrel).